The chain runs to 232 residues: Phosphatidylserine decarboxylase proenzyme (232 aa).

Ser190 functions as the Schiff-base intermediate with substrate; via pyruvic acid in the catalytic mechanism. Residue Ser190 is modified to Pyruvic acid (Ser); by autocatalysis.

The protein belongs to the phosphatidylserine decarboxylase family. PSD-A subfamily. In terms of assembly, heterodimer of a large membrane-associated beta subunit and a small pyruvoyl-containing alpha subunit. Pyruvate is required as a cofactor. Is synthesized initially as an inactive proenzyme. Formation of the active enzyme involves a self-maturation process in which the active site pyruvoyl group is generated from an internal serine residue via an autocatalytic post-translational modification. Two non-identical subunits are generated from the proenzyme in this reaction, and the pyruvate is formed at the N-terminus of the alpha chain, which is derived from the carboxyl end of the proenzyme. The post-translation cleavage follows an unusual pathway, termed non-hydrolytic serinolysis, in which the side chain hydroxyl group of the serine supplies its oxygen atom to form the C-terminus of the beta chain, while the remainder of the serine residue undergoes an oxidative deamination to produce ammonia and the pyruvoyl prosthetic group on the alpha chain.

It is found in the cell membrane. The catalysed reaction is a 1,2-diacyl-sn-glycero-3-phospho-L-serine + H(+) = a 1,2-diacyl-sn-glycero-3-phosphoethanolamine + CO2. It participates in phospholipid metabolism; phosphatidylethanolamine biosynthesis; phosphatidylethanolamine from CDP-diacylglycerol: step 2/2. Catalyzes the formation of phosphatidylethanolamine (PtdEtn) from phosphatidylserine (PtdSer). The polypeptide is Phosphatidylserine decarboxylase proenzyme (Cereibacter sphaeroides (strain ATCC 17025 / ATH 2.4.3) (Rhodobacter sphaeroides)).